Reading from the N-terminus, the 137-residue chain is Large ribosomal subunit protein uL16 (137 aa).

It belongs to the universal ribosomal protein uL16 family. Part of the 50S ribosomal subunit.

Functionally, binds 23S rRNA and is also seen to make contacts with the A and possibly P site tRNAs. This chain is Large ribosomal subunit protein uL16, found in Wolbachia pipientis subsp. Culex pipiens (strain wPip).